Consider the following 446-residue polypeptide: NAD kinase (446 aa).

Residues serine 46, serine 48, serine 50, serine 55, and serine 64 each carry the phosphoserine modification.

The protein belongs to the NAD kinase family. A divalent metal cation serves as cofactor. As to expression, widely expressed but not detected in skeletal muscle.

The enzyme catalyses NAD(+) + ATP = ADP + NADP(+) + H(+). The protein is NAD kinase (NADK) of Homo sapiens (Human).